The following is a 689-amino-acid chain: DNA ligase (689 aa).

Residues Asp40 to Asp44, Ser89 to Leu90, and Glu121 each bind NAD(+). Lys123 (N6-AMP-lysine intermediate) is an active-site residue. NAD(+) contacts are provided by Arg144, Glu179, Lys295, and Lys319. Residues Cys413, Cys416, Cys431, and Cys437 each coordinate Zn(2+). Residues Arg610–Ala689 form the BRCT domain.

It belongs to the NAD-dependent DNA ligase family. LigA subfamily. Mg(2+) is required as a cofactor. Mn(2+) serves as cofactor.

The catalysed reaction is NAD(+) + (deoxyribonucleotide)n-3'-hydroxyl + 5'-phospho-(deoxyribonucleotide)m = (deoxyribonucleotide)n+m + AMP + beta-nicotinamide D-nucleotide.. In terms of biological role, DNA ligase that catalyzes the formation of phosphodiester linkages between 5'-phosphoryl and 3'-hydroxyl groups in double-stranded DNA using NAD as a coenzyme and as the energy source for the reaction. It is essential for DNA replication and repair of damaged DNA. This Rickettsia prowazekii (strain Madrid E) protein is DNA ligase.